Consider the following 690-residue polypeptide: Protein SPT2 homolog (690 aa).

Residues 1–579 form an important for interaction with DNA region; the sequence is MDFHNILVMA…PGHRPVFRPQ (579 aa). Residues 40 to 82 adopt a coiled-coil conformation; the sequence is ESAAVQAFLRRKEEEKRKKELEEKRKKERLLAKRIELKHDRKA. 2 disordered regions span residues 105-167 and 186-619; these read PKKR…APAP and EIKV…QEEI. A compositionally biased stretch (basic and acidic residues) spans 186–228; that stretch reads EIKVVKKIEERPRTAEELREREYLERKNKRVETQKKKSEKEVK. A compositionally biased stretch (low complexity) spans 229 to 243; it reads SAGISSSSKKATSLK. 2 stretches are compositionally biased toward basic and acidic residues: residues 244 to 259 and 271 to 285; these read ECAD…DKHA and TDKK…EKHS. The segment covering 369–380 has biased composition (polar residues); that stretch reads HETNSSAKRPSS. A compositionally biased stretch (gly residues) spans 383–396; sequence GKGGSGHPAGGSSA. Residues 397-442 show a composition bias toward low complexity; that stretch reads GPGRSSSNSGTGPGRPGSVSSPGPGRQGSSSAAGPGRPSSSSSLGP. Gly residues-rich tracts occupy residues 443–457, 465–477, and 489–521; these read GRLG…GRPG, GRPG…GPGR, and LGSG…GPGR. Over residues 545-565 the composition is skewed to polar residues; that stretch reads VSETISSKNLVTRPSNGQING. The important for interaction with histones stretch occupies residues 580-690; the sequence is GIGRPPVGYK…KRQSKKLRTR (111 aa). Acidic residues predominate over residues 593–617; that stretch reads DDDDDDDEYDSEMDDFIEDEGEPQE. Residues 650-690 are a coiled coil; that stretch reads REQQKEEARSLRLGVQEDLEELRREEEELKRKRQSKKLRTR.

It belongs to the SPT2 family. As to quaternary structure, interacts with POLR1A. Interacts with histones. Interacts with a heterotetrameric complex formed by histone H3 and H4, especially when the histone tetramer is not bound to DNA.

The protein resides in the nucleus. It is found in the nucleolus. Functionally, histone chaperone that stabilizes pre-existing histone tetramers and regulates replication-independent histone exchange on chromatin. Required for normal chromatin refolding in the coding region of transcribed genes, and for the suppression of spurious transcription. Binds DNA and histones and promotes nucleosome assembly (in vitro). Modulates RNA polymerase 1-mediated transcription. Required for optimal growth in the presence of the DNA damaging agents actinomycin D or mitomycin C (in vitro). Facilitates formation of tetrameric histone complexes containing histone H3 and H4. Modulates RNA polymerase 1-mediated transcription. Binds DNA, with a preference for branched DNA species, such as Y-form DNA and Holliday junction DNA. This chain is Protein SPT2 homolog (SPTY2D1), found in Gallus gallus (Chicken).